The chain runs to 272 residues: Putative pyruvate, phosphate dikinase regulatory protein (272 aa).

149–156 serves as a coordination point for ADP; sequence GVSRTSKT.

Belongs to the pyruvate, phosphate/water dikinase regulatory protein family. PDRP subfamily.

The enzyme catalyses N(tele)-phospho-L-histidyl/L-threonyl-[pyruvate, phosphate dikinase] + ADP = N(tele)-phospho-L-histidyl/O-phospho-L-threonyl-[pyruvate, phosphate dikinase] + AMP + H(+). The catalysed reaction is N(tele)-phospho-L-histidyl/O-phospho-L-threonyl-[pyruvate, phosphate dikinase] + phosphate + H(+) = N(tele)-phospho-L-histidyl/L-threonyl-[pyruvate, phosphate dikinase] + diphosphate. Its function is as follows. Bifunctional serine/threonine kinase and phosphorylase involved in the regulation of the pyruvate, phosphate dikinase (PPDK) by catalyzing its phosphorylation/dephosphorylation. The protein is Putative pyruvate, phosphate dikinase regulatory protein of Lactiplantibacillus plantarum (strain ATCC BAA-793 / NCIMB 8826 / WCFS1) (Lactobacillus plantarum).